We begin with the raw amino-acid sequence, 261 residues long: Cytochrome c oxidase subunit 3 (261 aa).

Topologically, residues 1–15 are mitochondrial matrix; the sequence is MTHQTHAYHMVNPSP. The helical transmembrane segment at 16–34 threads the bilayer; it reads WPLTGALSALLMTSGLIMW. Residues 35–40 are Mitochondrial intermembrane-facing; that stretch reads FHFNST. Residues 41-66 traverse the membrane as a helical segment; the sequence is TLLMLGLTTNMLTMYQWWRDVVREST. The Mitochondrial matrix portion of the chain corresponds to 67–72; sequence FQGHHT. Residues 73 to 105 form a helical membrane-spanning segment; it reads PNVQKGLRYGMILFIISEVLFFTGFFWAFYHSS. Residues 106 to 128 lie on the Mitochondrial intermembrane side of the membrane; the sequence is LAPTPELGGCWPPTGINPLNPLE. A helical membrane pass occupies residues 129-152; sequence VPLLNTSVLLASGVSITWAHHSLM. The Mitochondrial matrix portion of the chain corresponds to 153–155; it reads EGN. The chain crosses the membrane as a helical span at residues 156-183; sequence RNHMLQALFITIALGVYFTLLQASEYYE. Residues 184 to 190 are Mitochondrial intermembrane-facing; the sequence is APFTISD. A helical transmembrane segment spans residues 191–223; sequence GVYGSTFFVATGFHGLHVIIGSTFLIVCFFRQL. The Mitochondrial matrix segment spans residues 224-232; the sequence is KFHFTSNHH. Residues 233 to 256 traverse the membrane as a helical segment; sequence FGFEAAAWYWHFVDVVWLFLYVSI. At 257 to 261 the chain is on the mitochondrial intermembrane side; it reads YWWGS.

The protein belongs to the cytochrome c oxidase subunit 3 family. Component of the cytochrome c oxidase (complex IV, CIV), a multisubunit enzyme composed of 14 subunits. The complex is composed of a catalytic core of 3 subunits MT-CO1, MT-CO2 and MT-CO3, encoded in the mitochondrial DNA, and 11 supernumerary subunits COX4I, COX5A, COX5B, COX6A, COX6B, COX6C, COX7A, COX7B, COX7C, COX8 and NDUFA4, which are encoded in the nuclear genome. The complex exists as a monomer or a dimer and forms supercomplexes (SCs) in the inner mitochondrial membrane with NADH-ubiquinone oxidoreductase (complex I, CI) and ubiquinol-cytochrome c oxidoreductase (cytochrome b-c1 complex, complex III, CIII), resulting in different assemblies (supercomplex SCI(1)III(2)IV(1) and megacomplex MCI(2)III(2)IV(2)).

Its subcellular location is the mitochondrion inner membrane. The enzyme catalyses 4 Fe(II)-[cytochrome c] + O2 + 8 H(+)(in) = 4 Fe(III)-[cytochrome c] + 2 H2O + 4 H(+)(out). Functionally, component of the cytochrome c oxidase, the last enzyme in the mitochondrial electron transport chain which drives oxidative phosphorylation. The respiratory chain contains 3 multisubunit complexes succinate dehydrogenase (complex II, CII), ubiquinol-cytochrome c oxidoreductase (cytochrome b-c1 complex, complex III, CIII) and cytochrome c oxidase (complex IV, CIV), that cooperate to transfer electrons derived from NADH and succinate to molecular oxygen, creating an electrochemical gradient over the inner membrane that drives transmembrane transport and the ATP synthase. Cytochrome c oxidase is the component of the respiratory chain that catalyzes the reduction of oxygen to water. Electrons originating from reduced cytochrome c in the intermembrane space (IMS) are transferred via the dinuclear copper A center (CU(A)) of subunit 2 and heme A of subunit 1 to the active site in subunit 1, a binuclear center (BNC) formed by heme A3 and copper B (CU(B)). The BNC reduces molecular oxygen to 2 water molecules using 4 electrons from cytochrome c in the IMS and 4 protons from the mitochondrial matrix. The polypeptide is Cytochrome c oxidase subunit 3 (MT-CO3) (Gazella leptoceros (Sand gazelle)).